The following is a 527-amino-acid chain: MNTYNYLIDELHILDDEIISYGKDKFKIELSLQERLKDKAPGKLILVTSINPTSSGEGKTTLSIGLAQGFKKNGKDVMLALREPSMGPVFGMKGGATGGGVSILEPSLDIDLHFNGDIHALTSANNLLSAIIDNHMYFGNELNIKDVYWQRALDVNDRSLREVKTKARDDKFTITAASEMMAILALARDFKDLKERLNNILIGTDKDGKDLFVSDLKCADSLALLLKDAIKPNLVFAKEMVPALVHAGPFANIAHGCNSVIATNTALKLADYVITEAGFGADLGMEKFLHIKQPHLYTKASVVVVVATIKALKLHGGVTESNLDEPNIEALSKGLENIEKHLENIKLFGLNSVVALNKFDTDSEEELQFLKNWARINHLNYGISEGYSKGGEGTKDLAKLVEKVAYEPSKFKRIYSNEENHEYKIRKIAENIYGAKDVIFSQQAKKKLNQYKHLEIPICIAKTPLSLSGDPKLKGRPRDFVLEISDIKVSLGANLLVVLTKGINTMPGLNNRPRALDFKLDDKGELI.

Residue Thr-53–Thr-60 participates in ATP binding.

It belongs to the formate--tetrahydrofolate ligase family.

It catalyses the reaction (6S)-5,6,7,8-tetrahydrofolate + formate + ATP = (6R)-10-formyltetrahydrofolate + ADP + phosphate. It functions in the pathway one-carbon metabolism; tetrahydrofolate interconversion. The chain is Formate--tetrahydrofolate ligase from Acholeplasma laidlawii (strain PG-8A).